Here is an 879-residue protein sequence, read N- to C-terminus: Metabotropic glutamate receptor 3 (879 aa).

Residues 1–22 form the signal peptide; sequence MKMLTRLQVLTLALFSKGFLLS. Topologically, residues 23-576 are extracellular; that stretch reads LGDHNFLRRE…EDYIRWEDAW (554 aa). Cys-57 and Cys-99 are oxidised to a cystine. Residues Ser-151 and 172–174 each bind L-glutamate; that span reads AST. Asn-209 is a glycosylation site (N-linked (GlcNAc...) asparagine). Residue Tyr-222 participates in L-glutamate binding. 7 disulfide bridges follow: Cys-240-Cys-527, Cys-361-Cys-373, Cys-412-Cys-419, Cys-509-Cys-528, Cys-513-Cys-531, Cys-534-Cys-546, and Cys-549-Cys-562. The N-linked (GlcNAc...) asparagine glycan is linked to Asn-292. Asp-301 contributes to the L-glutamate binding site. Lys-389 lines the L-glutamate pocket. N-linked (GlcNAc...) asparagine glycans are attached at residues Asn-414 and Asn-439. Residues 577 to 599 form a helical membrane-spanning segment; sequence VIGPVTIACLGFMCTCMVVTVFI. Residues 600-613 are Cytoplasmic-facing; it reads KHNNTPLVKASGRE. A helical transmembrane segment spans residues 614–634; that stretch reads LCYILLFGVGLSYCMTFFFIA. Topologically, residues 635–645 are extracellular; that stretch reads KPSPVICALRR. The chain crosses the membrane as a helical span at residues 646 to 664; sequence LGLGSSFAICYSALLTKTN. The Cytoplasmic segment spans residues 665 to 688; the sequence is CIARIFDGVKNGAQRPKFISPSSQ. The helical transmembrane segment at 689-709 threads the bilayer; sequence VFICLGLILVQIVMVSVWLIL. At 710–734 the chain is on the extracellular side; sequence EAPGTRRYTLAEKRETVILKCNVKD. A helical transmembrane segment spans residues 735 to 756; that stretch reads SSMLISLTYDVILVILCTVYAF. Over 757 to 769 the chain is Cytoplasmic; sequence KTRKCPENFNEAK. A helical membrane pass occupies residues 770-792; it reads FIGFTMYTTCIIWLAFLPIFYVT. The Extracellular segment spans residues 793–802; it reads SSDYRVQTTT. Residues 803-828 traverse the membrane as a helical segment; the sequence is MCISVSLSGFVVLGCLFAPKVHIILF. Residues 829-879 lie on the Cytoplasmic side of the membrane; sequence QPQKNVVTHRLHLNRFSVSGTGTTYSQSSASTYVPTVCNGREVLDSTTSSL.

It belongs to the G-protein coupled receptor 3 family. As to quaternary structure, interacts with TAMALIN.

The protein resides in the cell membrane. G-protein coupled receptor for glutamate. Ligand binding causes a conformation change that triggers signaling via guanine nucleotide-binding proteins (G proteins) and modulates the activity of down-stream effectors. Signaling inhibits adenylate cyclase activity. This chain is Metabotropic glutamate receptor 3 (GRM3), found in Pongo abelii (Sumatran orangutan).